The sequence spans 260 residues: Tryptophan synthase alpha chain (260 aa).

Catalysis depends on proton acceptor residues E52 and D63.

It belongs to the TrpA family. As to quaternary structure, tetramer of two alpha and two beta chains.

It carries out the reaction (1S,2R)-1-C-(indol-3-yl)glycerol 3-phosphate + L-serine = D-glyceraldehyde 3-phosphate + L-tryptophan + H2O. It participates in amino-acid biosynthesis; L-tryptophan biosynthesis; L-tryptophan from chorismate: step 5/5. Its function is as follows. The alpha subunit is responsible for the aldol cleavage of indoleglycerol phosphate to indole and glyceraldehyde 3-phosphate. The chain is Tryptophan synthase alpha chain from Streptococcus thermophilus (strain ATCC BAA-250 / LMG 18311).